Consider the following 135-residue polypeptide: Type 3 secretion system stator protein (135 aa).

Belongs to the SctL stator family. In terms of assembly, the core secretion machinery of the T3SS is composed of approximately 20 different proteins, including cytoplasmic components, a base, an export apparatus and a needle. This subunit is part of the cytosolic complex.

The protein localises to the cytoplasm. Functionally, component of the type III secretion system (T3SS), also called injectisome, which is used to inject bacterial effector proteins into eukaryotic host cells. Acts as a regulator of the HrcN/SctN ATPase activity. This is Type 3 secretion system stator protein from Rhizobium fredii (Sinorhizobium fredii).